A 607-amino-acid polypeptide reads, in one-letter code: Elongation factor 4 (607 aa).

Residues 11 to 193 (KNIRNFSIIA…KIVEVVPPPE (183 aa)) form the tr-type G domain. GTP is bound by residues 23 to 28 (DHGKST) and 140 to 143 (NKID).

The protein belongs to the TRAFAC class translation factor GTPase superfamily. Classic translation factor GTPase family. LepA subfamily.

Its subcellular location is the cell membrane. It carries out the reaction GTP + H2O = GDP + phosphate + H(+). In terms of biological role, required for accurate and efficient protein synthesis under certain stress conditions. May act as a fidelity factor of the translation reaction, by catalyzing a one-codon backward translocation of tRNAs on improperly translocated ribosomes. Back-translocation proceeds from a post-translocation (POST) complex to a pre-translocation (PRE) complex, thus giving elongation factor G a second chance to translocate the tRNAs correctly. Binds to ribosomes in a GTP-dependent manner. In Staphylococcus saprophyticus subsp. saprophyticus (strain ATCC 15305 / DSM 20229 / NCIMB 8711 / NCTC 7292 / S-41), this protein is Elongation factor 4.